The primary structure comprises 781 residues: MSPLSLPVATLGTPRIGPRRELKLALESYWAGKISEQQLHEDAFGLRAANWARQKSLGVTIIPSNDFSLYDQVLDTSVMVGAIPEIYAANGESVSLQTYFAMARGSQCGEQDASCAQSPRGSGVPAQEMTKWFDTNYHYMVPEFYRGQAFRLCSRKPVEEYEEARALGFQTRPVLIGPVTFLKLGKSTDSAFQPLSLLDDLIPVYIDLLHELAKRGASWVQFDEPCLVLDLDEAARNSLLHAYNRFAKEGPAIKIMLASYFGALGDNLDTALSLPISGLHVDLVRAPELLDQIVADGRSDLVMSLGVIDGRNVWRSNLPSLRQRLKPSIAKLGRHRVQLAPSCSLLHVPVDVELETGLASDVKSWLAFSVQKMRELAILARVLAGDQNVGLALAESECAATARRTSPKIHNANVAVRMRAIDQTMRQRATPFARRSEIQRERFGLPAFPTTTIGSFPQTTAVRNARAAHARGAMSEEQYDRFLKEEIARAVRWQEDIGLDVLVHGEFERNDMVQYFSEQLAGFAFTRNGWVQSYGSRCVRPPILFGDVVRPKPITVEWWRYAQSLTSKPMKAMLTGPVTILNWSFVRDDIPRSEVCRQLALAMRDEVRDLENAGAAMIQIDEAALREGLPLRRSDWKAYLDWAGDCFRICSSGVTDQTQIHTHMCYSEFNDIIGAIAAMDADVISIETSRSKMELLDAFRRYEYPNQIGPGVYDIHSPRVPETDEMKELIVLARTRLQDSQLWVNPDCGLKTRKWEEVRPALANMVAAARELRAASDPQIR.

Residues 20–23 (RELK) and Lys131 each bind 5-methyltetrahydropteroyltri-L-glutamate. L-homocysteine-binding positions include 453-455 (IGS) and Glu506. Residues 453-455 (IGS) and Glu506 each bind L-methionine. 5-methyltetrahydropteroyltri-L-glutamate-binding positions include 537-538 (RC) and Trp583. Residue Asp621 participates in L-homocysteine binding. An L-methionine-binding site is contributed by Asp621. Glu627 contacts 5-methyltetrahydropteroyltri-L-glutamate. Positions 663, 665, and 687 each coordinate Zn(2+). Residue His716 is the Proton donor of the active site. Residue Cys748 participates in Zn(2+) binding.

This sequence belongs to the vitamin-B12 independent methionine synthase family. Zn(2+) serves as cofactor.

It catalyses the reaction 5-methyltetrahydropteroyltri-L-glutamate + L-homocysteine = tetrahydropteroyltri-L-glutamate + L-methionine. It participates in amino-acid biosynthesis; L-methionine biosynthesis via de novo pathway; L-methionine from L-homocysteine (MetE route): step 1/1. Catalyzes the transfer of a methyl group from 5-methyltetrahydrofolate to homocysteine resulting in methionine formation. This is 5-methyltetrahydropteroyltriglutamate--homocysteine methyltransferase from Bradyrhizobium diazoefficiens (strain JCM 10833 / BCRC 13528 / IAM 13628 / NBRC 14792 / USDA 110).